A 372-amino-acid polypeptide reads, in one-letter code: Proton-coupled zinc antiporter SLC30A2 (372 aa).

The Cytoplasmic segment spans residues 1–140 (MEAKEKQHLL…TMNFGWQRAE (140 aa)). A Mitochondrial localization signal motif is present at residues 51-54 (HHCH). Zn(2+)-binding residues include C53, H106, and D110. Residues 141-161 (ILGALVSVLSIWVVTGVLVYL) form a helical membrane-spanning segment. At 162 to 175 (AVERLISGDYEIDG) the chain is on the lumenal side. The helical transmembrane segment at 176–196 (GTMLITSGCAVAVNIIMGLTL) threads the bilayer. Over 197 to 220 (HQSGHGHSHGTTNQQEENPSVRAA) the chain is Cytoplasmic. Residues 221 to 241 (FIHVIGDFMQSMGVLVAAYIL) form a helical membrane-spanning segment. Zn(2+) is bound by residues H223 and D227. The Lumenal segment spans residues 242-249 (YFKPEYKY). Residues 250 to 270 (VDPICTFVFSILVLGTTLTIL) form a helical membrane-spanning segment. Over 271–304 (RDVILVLMEGTPKGVDFTAVRDLLLSVEGVEALH) the chain is Cytoplasmic. The short motif at 294 to 295 (LL) is the Lysosomal targeting motif element. Residue S296 is modified to Phosphoserine. H304, H321, and E355 together coordinate Zn(2+). Residues 305-325 (SLHIWALTVAQPVLSVHIAIA) traverse the membrane as a helical segment. The Lumenal segment spans residues 326 to 372 (QNTDAQAVLKTASSRLQGKFHFHTVTIQIEDYSEDMKDCQACQGPSD).

It belongs to the cation diffusion facilitator (CDF) transporter (TC 2.A.4) family. SLC30A subfamily. As to quaternary structure, homodimer. Interacts (via lysosomal targeting motif) with AP3D1; in AP-3-mediated transport to lysosomes. Interacts with TMEM163. Post-translationally, phosphorylated at Ser-296. Phosphorylation at Ser-296 prevents localization to lysosomes. Dephosphorylation of Ser-296 which triggers localization to lysosomes, accumulation of zinc into lysosomes and lysosomal-mediated cell death is induced by TNF-alpha.

The protein resides in the cytoplasmic vesicle. It is found in the secretory vesicle membrane. The protein localises to the zymogen granule membrane. It localises to the endosome membrane. Its subcellular location is the lysosome membrane. The protein resides in the mitochondrion inner membrane. It is found in the cell membrane. It carries out the reaction Zn(2+)(in) + 2 H(+)(out) = Zn(2+)(out) + 2 H(+)(in). In terms of biological role, electroneutral proton-coupled antiporter concentrating zinc ions into a variety of intracellular organelles including endosomes, zymogen granules and mitochondria. Thereby, plays a crucial role in cellular zinc homeostasis to confer upon cells protection against its potential cytotoxicity. Regulates the zinc concentration of milk, through the transport of zinc ions into secretory vesicles of mammary cells. By concentrating zinc ions into lysosomes participates to lysosomal-mediated cell death during early mammary gland involution. Its function is as follows. Electroneutral proton-coupled antiporter mediating the efflux of zinc ions through the plasma membrane. This is Proton-coupled zinc antiporter SLC30A2 from Homo sapiens (Human).